The primary structure comprises 255 residues: Type III pantothenate kinase (255 aa).

Residue 7-14 participates in ATP binding; that stretch reads DVGNTRLK. Residues tyrosine 96 and 103–106 each bind substrate; that span reads GADR. The active-site Proton acceptor is the aspartate 105. Threonine 133 is a binding site for ATP. Position 183 (threonine 183) interacts with substrate.

Belongs to the type III pantothenate kinase family. As to quaternary structure, homodimer. NH4(+) serves as cofactor. It depends on K(+) as a cofactor.

It localises to the cytoplasm. The enzyme catalyses (R)-pantothenate + ATP = (R)-4'-phosphopantothenate + ADP + H(+). Its pathway is cofactor biosynthesis; coenzyme A biosynthesis; CoA from (R)-pantothenate: step 1/5. In terms of biological role, catalyzes the phosphorylation of pantothenate (Pan), the first step in CoA biosynthesis. The chain is Type III pantothenate kinase from Albidiferax ferrireducens (strain ATCC BAA-621 / DSM 15236 / T118) (Rhodoferax ferrireducens).